The chain runs to 649 residues: DNA mismatch repair protein MutL (649 aa).

Belongs to the DNA mismatch repair MutL/HexB family.

This protein is involved in the repair of mismatches in DNA. It is required for dam-dependent methyl-directed DNA mismatch repair. May act as a 'molecular matchmaker', a protein that promotes the formation of a stable complex between two or more DNA-binding proteins in an ATP-dependent manner without itself being part of a final effector complex. This is DNA mismatch repair protein MutL from Streptococcus pneumoniae (strain JJA).